Here is a 276-residue protein sequence, read N- to C-terminus: Elongation factor Ts (276 aa).

The tract at residues 79-82 (TDFV) is involved in Mg(2+) ion dislocation from EF-Tu.

The protein belongs to the EF-Ts family.

Its subcellular location is the cytoplasm. Its function is as follows. Associates with the EF-Tu.GDP complex and induces the exchange of GDP to GTP. It remains bound to the aminoacyl-tRNA.EF-Tu.GTP complex up to the GTP hydrolysis stage on the ribosome. This is Elongation factor Ts from Buchnera aphidicola subsp. Cinara cedri (strain Cc).